A 55-amino-acid polypeptide reads, in one-letter code: Large ribosomal subunit protein bL33 (55 aa).

This sequence belongs to the bacterial ribosomal protein bL33 family.

The polypeptide is Large ribosomal subunit protein bL33 (Maricaulis maris (strain MCS10) (Caulobacter maris)).